Here is a 52-residue protein sequence, read N- to C-terminus: Large ribosomal subunit protein bL32c (52 aa).

The protein belongs to the bacterial ribosomal protein bL32 family.

The protein localises to the plastid. It localises to the chloroplast. The sequence is that of Large ribosomal subunit protein bL32c from Arabis hirsuta (Hairy rock-cress).